The sequence spans 258 residues: Alpha-fibrinogenase (258 aa).

The signal sequence occupies residues 1–18; that stretch reads MVLIRVLANLVMLHLSYG. Positions 19-24 are excised as a propeptide; it reads EKSSEL. The Peptidase S1 domain occupies 25–249; sequence VIGGRPCNIN…YNDWIQSIIA (225 aa). Intrachain disulfides connect Cys-31/Cys-163, Cys-50/Cys-66, Cys-98/Cys-256, Cys-142/Cys-210, Cys-174/Cys-189, and Cys-200/Cys-225. Asn-44 is a glycosylation site (N-linked (GlcNAc...) asparagine). The active-site Charge relay system is the His-65. 2 N-linked (GlcNAc...) asparagine glycosylation sites follow: Asn-79 and Asn-101. The active-site Charge relay system is Asp-110. Catalysis depends on Ser-204, which acts as the Charge relay system.

It belongs to the peptidase S1 family. Snake venom subfamily. Monomer. In terms of processing, glycosylated. Contains 8.5% of hexoses, 5.8% of hexosamines and 0.8% of sialic acids. In terms of tissue distribution, expressed by the venom gland.

The protein resides in the secreted. With respect to regulation, inhibited by diisopropylfluorophosphate (DFP) and PMSF, and partially by soybean trypsin inhibitor, but not by EDTA. Degrades alpha chain of fibrinogen (FGA), and has strong caseinolytic activity. Cleaves oxidized insulin B-chain at '40-Tyr-|-Leu-41', '48-Phe-|-Phe-49' and '49-Phe-|-Tyr-50', and glucagon at the bonds '62-Tyr-|-Ser-63', 66-Leu-|-Asp-67' and '78-Leu-|-Met-79' bonds. The chain is Alpha-fibrinogenase from Macrovipera lebetinus (Levantine viper).